We begin with the raw amino-acid sequence, 362 residues long: Aminomethyltransferase (362 aa).

The protein belongs to the GcvT family. In terms of assembly, the glycine cleavage system is composed of four proteins: P, T, L and H.

The catalysed reaction is N(6)-[(R)-S(8)-aminomethyldihydrolipoyl]-L-lysyl-[protein] + (6S)-5,6,7,8-tetrahydrofolate = N(6)-[(R)-dihydrolipoyl]-L-lysyl-[protein] + (6R)-5,10-methylene-5,6,7,8-tetrahydrofolate + NH4(+). Functionally, the glycine cleavage system catalyzes the degradation of glycine. The chain is Aminomethyltransferase from Pseudothermotoga lettingae (strain ATCC BAA-301 / DSM 14385 / NBRC 107922 / TMO) (Thermotoga lettingae).